We begin with the raw amino-acid sequence, 156 residues long: SsrA-binding protein (156 aa).

This sequence belongs to the SmpB family.

The protein resides in the cytoplasm. In terms of biological role, required for rescue of stalled ribosomes mediated by trans-translation. Binds to transfer-messenger RNA (tmRNA), required for stable association of tmRNA with ribosomes. tmRNA and SmpB together mimic tRNA shape, replacing the anticodon stem-loop with SmpB. tmRNA is encoded by the ssrA gene; the 2 termini fold to resemble tRNA(Ala) and it encodes a 'tag peptide', a short internal open reading frame. During trans-translation Ala-aminoacylated tmRNA acts like a tRNA, entering the A-site of stalled ribosomes, displacing the stalled mRNA. The ribosome then switches to translate the ORF on the tmRNA; the nascent peptide is terminated with the 'tag peptide' encoded by the tmRNA and targeted for degradation. The ribosome is freed to recommence translation, which seems to be the essential function of trans-translation. The chain is SsrA-binding protein from Desulfitobacterium hafniense (strain DSM 10664 / DCB-2).